The sequence spans 331 residues: Phosphate acyltransferase (331 aa).

It belongs to the PlsX family. In terms of assembly, homodimer. Probably interacts with PlsY.

The protein localises to the cytoplasm. It catalyses the reaction a fatty acyl-[ACP] + phosphate = an acyl phosphate + holo-[ACP]. It functions in the pathway lipid metabolism; phospholipid metabolism. In terms of biological role, catalyzes the reversible formation of acyl-phosphate (acyl-PO(4)) from acyl-[acyl-carrier-protein] (acyl-ACP). This enzyme utilizes acyl-ACP as fatty acyl donor, but not acyl-CoA. This chain is Phosphate acyltransferase, found in Ureaplasma parvum serovar 3 (strain ATCC 27815 / 27 / NCTC 11736).